The sequence spans 424 residues: Elongation factor 1-alpha (424 aa).

One can recognise a tr-type G domain in the interval 5–223 (KPHMNLVIIG…NALQVPAKPV (219 aa)). The G1 stretch occupies residues 14 to 21 (GHVDHGKS). 14-21 (GHVDHGKS) provides a ligand contact to GTP. Position 21 (serine 21) interacts with Mg(2+). The G2 stretch occupies residues 70–74 (GVTID). A G3 region spans residues 91–94 (DAPG). Residues 91-95 (DAPGH) and 148-151 (NKMD) each bind GTP. The segment at 148–151 (NKMD) is G4. The tract at residues 187–189 (SGY) is G5.

This sequence belongs to the TRAFAC class translation factor GTPase superfamily. Classic translation factor GTPase family. EF-Tu/EF-1A subfamily.

Its subcellular location is the cytoplasm. It carries out the reaction GTP + H2O = GDP + phosphate + H(+). In terms of biological role, GTP hydrolase that promotes the GTP-dependent binding of aminoacyl-tRNA to the A-site of ribosomes during protein biosynthesis. The protein is Elongation factor 1-alpha of Picrophilus torridus (strain ATCC 700027 / DSM 9790 / JCM 10055 / NBRC 100828 / KAW 2/3).